The chain runs to 203 residues: Somatotropin (203 aa).

Residues M1 to S17 form the signal peptide. At Q18 the chain carries Pyrrolidone carboxylic acid. H36 contacts Zn(2+). Residues C68 and C176 are joined by a disulfide bond. E185 provides a ligand contact to Zn(2+). An intrachain disulfide couples C193 to C201.

It belongs to the somatotropin/prolactin family.

The protein localises to the secreted. Growth hormone plays an important role in growth control and is involved in the regulation of several anabolic processes. Implicated as an osmoregulatory substance important for seawater adaptation. This is Somatotropin (gh) from Pagrus major (Red sea bream).